We begin with the raw amino-acid sequence, 394 residues long: Imidazolonepropionase (394 aa).

Positions 61 and 63 each coordinate Fe(3+). Zn(2+) contacts are provided by His-61 and His-63. Residues Arg-70, Tyr-133, and His-164 each coordinate 4-imidazolone-5-propanoate. Residue Tyr-133 participates in N-formimidoyl-L-glutamate binding. Residue His-225 coordinates Fe(3+). His-225 is a binding site for Zn(2+). A 4-imidazolone-5-propanoate-binding site is contributed by Glu-228. Residue Asp-299 participates in Fe(3+) binding. Asp-299 serves as a coordination point for Zn(2+).

It belongs to the metallo-dependent hydrolases superfamily. HutI family. It depends on Zn(2+) as a cofactor. The cofactor is Fe(3+).

The protein localises to the cytoplasm. The enzyme catalyses 4-imidazolone-5-propanoate + H2O = N-formimidoyl-L-glutamate. It functions in the pathway amino-acid degradation; L-histidine degradation into L-glutamate; N-formimidoyl-L-glutamate from L-histidine: step 3/3. Its function is as follows. Catalyzes the hydrolytic cleavage of the carbon-nitrogen bond in imidazolone-5-propanoate to yield N-formimidoyl-L-glutamate. It is the third step in the universal histidine degradation pathway. This Picrophilus torridus (strain ATCC 700027 / DSM 9790 / JCM 10055 / NBRC 100828 / KAW 2/3) protein is Imidazolonepropionase.